The primary structure comprises 380 residues: Histidinol-phosphate aminotransferase (380 aa).

Residue K232 is modified to N6-(pyridoxal phosphate)lysine.

It belongs to the class-II pyridoxal-phosphate-dependent aminotransferase family. Histidinol-phosphate aminotransferase subfamily. In terms of assembly, homodimer. It depends on pyridoxal 5'-phosphate as a cofactor.

The enzyme catalyses L-histidinol phosphate + 2-oxoglutarate = 3-(imidazol-4-yl)-2-oxopropyl phosphate + L-glutamate. Its pathway is amino-acid biosynthesis; L-histidine biosynthesis; L-histidine from 5-phospho-alpha-D-ribose 1-diphosphate: step 7/9. The chain is Histidinol-phosphate aminotransferase from Mycobacterium bovis (strain BCG / Pasteur 1173P2).